A 354-amino-acid polypeptide reads, in one-letter code: Polyribonucleotide 5'-hydroxyl-kinase PYRAB01840 (354 aa).

36 to 43 (GDVDTGKT) provides a ligand contact to ATP.

A divalent metal cation serves as cofactor.

The enzyme catalyses a 5'-end dephospho-2'-deoxyribonucleoside-DNA + ATP = a 5'-end 5'-phospho-2'-deoxyribonucleoside-DNA + ADP + H(+). It carries out the reaction a 5'-end dephospho-ribonucleoside-RNA + ATP = a 5'-end 5'-phospho-ribonucleoside-RNA + ADP + H(+). Functionally, polynucleotide kinase that can phosphorylate the 5'-hydroxyl groups of both single-stranded RNA (ssRNA) and single-stranded DNA (ssDNA). Exhibits a strong preference for ssRNA. The protein is Polyribonucleotide 5'-hydroxyl-kinase PYRAB01840 of Pyrococcus abyssi (strain GE5 / Orsay).